The sequence spans 267 residues: Undecaprenyl-diphosphatase (267 aa).

Transmembrane regions (helical) follow at residues 39 to 59, 87 to 107, 111 to 131, 149 to 169, 189 to 209, 218 to 238, and 244 to 264; these read QGLA…ILYF, WMIA…KDFI, LRSA…LWWV, ALFI…RSGA, FLMS…KLVT, ALSI…HAFL, and VGMM…IAFL.

Belongs to the UppP family.

The protein resides in the cell inner membrane. It catalyses the reaction di-trans,octa-cis-undecaprenyl diphosphate + H2O = di-trans,octa-cis-undecaprenyl phosphate + phosphate + H(+). In terms of biological role, catalyzes the dephosphorylation of undecaprenyl diphosphate (UPP). Confers resistance to bacitracin. The sequence is that of Undecaprenyl-diphosphatase from Photobacterium profundum (strain SS9).